A 369-amino-acid chain; its full sequence is Coproporphyrin III ferrochelatase (369 aa).

2 residues coordinate Fe-coproporphyrin III: Ser61 and Tyr130. Residues His197 and Glu286 each coordinate Fe(2+).

This sequence belongs to the ferrochelatase family.

The protein localises to the cytoplasm. It carries out the reaction Fe-coproporphyrin III + 2 H(+) = coproporphyrin III + Fe(2+). The protein operates within porphyrin-containing compound metabolism; protoheme biosynthesis. Its function is as follows. Involved in coproporphyrin-dependent heme b biosynthesis. Catalyzes the insertion of ferrous iron into coproporphyrin III to form Fe-coproporphyrin III. The chain is Coproporphyrin III ferrochelatase from Corynebacterium diphtheriae (strain ATCC 700971 / NCTC 13129 / Biotype gravis).